Consider the following 411-residue polypeptide: Coiled-coil domain-containing protein 159 (411 aa).

The tract at residues glutamate 84 to valine 113 is disordered. Basic and acidic residues predominate over residues alanine 91 to proline 102. Positions glutamate 269–threonine 305 form a coiled coil. A disordered region spans residues arginine 372–alanine 411. Residues cysteine 384 to aspartate 393 show a composition bias toward polar residues.

In terms of assembly, interacts with DYNLT2. Interacts with GGNBP1. Interacts with OSBP2. In terms of tissue distribution, expressed in spermatids but undetectable in the spermatozoon (at protein level). Highly expressed in the testis (at protein level).

Functions during spermatid development; may participate in the centrosome reduction procedure of spermatids and is required for the formation of the connecting piece/sperm head-tail coupling apparatus (HTCA) and the correct and tight attachment of the flagellum to the nuclear envelope. This is Coiled-coil domain-containing protein 159 (Ccdc159) from Mus musculus (Mouse).